The sequence spans 60 residues: Small integral membrane protein 3 (60 aa).

A helical membrane pass occupies residues isoleucine 20 to cysteine 40.

The protein resides in the membrane. In Rattus norvegicus (Rat), this protein is Small integral membrane protein 3 (Smim3).